The primary structure comprises 462 residues: N-myc proto-oncogene protein (462 aa).

The segment at 19–47 (LEFDSLQPCFYPDEDDFYFGGPDSTPPGE) is interaction with AURKA. The interaction with AURKA and FBXW7 stretch occupies residues 61–90 (LSPSRAFPEHSPEPSNWATEMLLPEADLWG). A 9aaTAD motif is present at residues 76-85 (NWATEMLLPE). Disordered stretches follow at residues 134–177 (KLQH…ATLP), 232–289 (AAPA…SSNN), and 332–390 (APSP…LERQ). 2 stretches are compositionally biased toward low complexity: residues 143 to 176 (GVSS…GATL) and 232 to 244 (AAPA…PASS). The span at 257 to 276 (TLSDSDDEDDEEEDEEEEID) shows a compositional bias: acidic residues. A phosphoserine; by CK2 mark is found at S259 and S261. In terms of domain architecture, bHLH spans 379 to 431 (ERRRNHNILERQRRNDLRSSFLTLRDHVPELVKNEKAAKVVILKKATEYVHAL). The interval 431–452 (LQANEHQLLLEKEKLQARQQQL) is leucine-zipper.

As to quaternary structure, efficient DNA binding requires dimerization with another bHLH protein. Binds DNA as a heterodimer with MAX. Interacts with KDM5A, KDM5B and HUWE1. Interacts with MYCNOS. Interacts with AURKA; interaction is phospho-independent and triggers AURKA activation; AURKA competes with FBXW7 for binding to unphosphorylated MYCN but not for binding to unphosphorylated MYCN. Interacts with FBXW7; FBXW7 competes with AURKA for binding to unphosphorylated MYCN but not for binding to phosphorylated MYCN. In terms of processing, phosphorylated by GSK3-beta which may promote its degradation. Phosphorylated by AURKA.

It localises to the nucleus. In terms of biological role, positively regulates the transcription of MYCNOS in neuroblastoma cells. The chain is N-myc proto-oncogene protein (Mycn) from Mus musculus (Mouse).